A 504-amino-acid polypeptide reads, in one-letter code: UDP-N-acetylglucosamine--peptide N-acetylglucosaminyltransferase GtfA subunit (504 aa).

16 to 19 (GVEY) is a binding site for UDP. His-243 serves as a coordination point for N-acetyl-D-glucosamine. 385–386 (HK) contacts UDP. Residue 405-408 (EGFG) coordinates N-acetyl-D-glucosamine.

It belongs to the glycosyltransferase group 1 family. Glycosyltransferase 4 subfamily. In terms of assembly, interacts with stabilizing protein GtfB (Gtf1), probably via the N-terminus of this protein; probably forms a heterotetramer with 2 subunits each of GtfA and GtfB. Part of the accessory SecA2/SecY2 protein translocation apparatus.

The protein localises to the cytoplasm. It is found in the cell membrane. The catalysed reaction is L-seryl-[protein] + UDP-N-acetyl-alpha-D-glucosamine = 3-O-[N-acetyl-alpha-D-glucosaminyl]-L-seryl-[protein] + UDP + H(+). It functions in the pathway protein modification; protein glycosylation. Functionally, required for polymorphic O-glycosylation of serine-rich repeat protein Fap1. Catalyzes the first step in glycosylation by transferring N-acetylglucosamine from UDP-GlcNAc to serine residues in Fap1. Part of the accessory SecA2/SecY2 system specifically required to export Fap1, a serine-rich fimbrial adhesin encoded upstream in the same operon. The GtfA-GtfB (Gtf1-Gtf2 in this bacteria) complex adds GlcNAc from UDP-GlcNAc to Fap1, attaching the first sugar residue. Cannot use not UDP-Glc as substrate. This subunit has very low glycosyltransferase activity; the GtfB stabilizing protein enhances membrane association, protease resistance and glycosyltransferase activity. This is UDP-N-acetylglucosamine--peptide N-acetylglucosaminyltransferase GtfA subunit from Streptococcus parasanguinis.